A 148-amino-acid chain; its full sequence is Small ribosomal subunit protein bS16 (148 aa).

The tract at residues 107 to 148 is disordered; sequence AAARAAAGAEDRPATTPKKAKKAASADGADAPAADAPTAAGQ. The span at 129–148 shows a compositional bias: low complexity; the sequence is AASADGADAPAADAPTAAGQ.

Belongs to the bacterial ribosomal protein bS16 family.

This chain is Small ribosomal subunit protein bS16, found in Frankia alni (strain DSM 45986 / CECT 9034 / ACN14a).